The primary structure comprises 555 residues: MSEAEARPSNFIRQIIDEDLASGKHTTVHTRFPPEPNGYLHIGHAKSICLNFGIAQDYQGQCNLRFDDTNPVKEDIEYVESIKNDVQWLGFNWSGDICYSSDYFDQLFAYAVELINKGLAYVDELSADEIREYRGSLTAPGKNSPYRDRSVEENLALFEKMRAGGFEEGKACLRAKIDMASPFIVMRDPVLYRIKFAEHHQTGNKWCIYPMYDFTHCISDALEGITHSLCTLEFQDNRRLYDWVLDNITIPVHPRQYEFSRLNLEYTVMSKRKLNLLVTDKHVEGWDDPRMPTISGLRRRGYSASSIREFIKRIGVTKQDNTIEMASLESCIREDLNENAPRAMAVIDPVKLVIENYPQGESELVTMPNHPSKPEMGSREVPFSAEIWIDRADFREEANKQYKRLVMGKEVRLRNAYVIKAERVEKDTEGNITTIFCSYDAETLSKDPADGRKVKGVIHWVSAAHALPVEIRLYDRLFSVPNPGAAEDFLATINPESLLIKQGYAEPSLKNAETGKAYQFEREGYFCLDSRYATATKLVFNRTVGLRDTWAKAGE.

Residues 34–44 carry the 'HIGH' region motif; the sequence is PEPNGYLHIGH. Residues 35–37 and 41–47 each bind ATP; these read EPN and HIGHAKS. The L-glutamine site is built by D67 and Y212. Residues T231, 261 to 262, and 269 to 271 each bind ATP; these read RL and MSK. The 'KMSKS' region motif lies at 268-272; that stretch reads VMSKR. Residues 317 to 324 form an interaction with tRNA region; sequence TKQDNTIE.

The protein belongs to the class-I aminoacyl-tRNA synthetase family. Monomer.

Its subcellular location is the cytoplasm. It catalyses the reaction tRNA(Gln) + L-glutamine + ATP = L-glutaminyl-tRNA(Gln) + AMP + diphosphate. The chain is Glutamine--tRNA ligase from Enterobacter sp. (strain 638).